We begin with the raw amino-acid sequence, 236 residues long: uncharacterized protein (236 aa).

The first 22 residues, 1–22 (MEFKMQKIILGMLVVTASNAMA), serve as a signal peptide directing secretion.

This is an uncharacterized protein from Pasteurella multocida (strain Pm70).